Here is a 604-residue protein sequence, read N- to C-terminus: 3-hydroxy-3-methylglutaryl-coenzyme A reductase 2 (604 aa).

Helical transmembrane passes span 47-67 and 91-111; these read LPLY…MYFL and AIVS…IGFV. The segment at 112-188 is linker; sequence QTFVARGNND…APLVTPAASE (77 aa). Asparagine 120 is a glycosylation site (N-linked (GlcNAc...) asparagine). The interval 189-604 is catalytic; sequence EDEEIIKSVV…STKDVTKASS (416 aa). Glutamate 283 serves as the catalytic Charge relay system. An N-linked (GlcNAc...) asparagine glycan is attached at asparagine 347. Lysine 415 (charge relay system) is an active-site residue. An N-linked (GlcNAc...) asparagine glycan is attached at asparagine 460. The active-site Charge relay system is the aspartate 491. Histidine 589 (proton donor) is an active-site residue. Asparagine 593 is a glycosylation site (N-linked (GlcNAc...) asparagine).

It belongs to the HMG-CoA reductase family.

It is found in the endoplasmic reticulum membrane. It catalyses the reaction (R)-mevalonate + 2 NADP(+) + CoA = (3S)-3-hydroxy-3-methylglutaryl-CoA + 2 NADPH + 2 H(+). Its pathway is metabolic intermediate biosynthesis; (R)-mevalonate biosynthesis; (R)-mevalonate from acetyl-CoA: step 3/3. Catalyzes the synthesis of mevalonate. The specific precursor of all isoprenoid compounds present in plants. The sequence is that of 3-hydroxy-3-methylglutaryl-coenzyme A reductase 2 (HMGR2) from Capsicum annuum (Capsicum pepper).